We begin with the raw amino-acid sequence, 1169 residues long: Pesticidal crystal protein Cry8Ba (1169 aa).

The tract at residues 1-26 (MSPNNQNEYEIIDATPSTSVSNDSNR) is disordered. Residues 15 to 25 (TPSTSVSNDSN) show a composition bias toward polar residues.

Belongs to the delta endotoxin family.

Functionally, promotes colloidosmotic lysis by binding to the midgut epithelial cells of insects. Active on various scarabaeid beetles. The polypeptide is Pesticidal crystal protein Cry8Ba (cry8Ba) (Bacillus thuringiensis serovar kumamotoensis).